Consider the following 610-residue polypeptide: Myosin light chain kinase 2, skeletal/cardiac muscle (610 aa).

2 disordered regions span residues 1-168 and 196-240; these read MATE…HSPS and VSET…DTSQ. The residue at position 2 (Ala-2) is an N-acetylalanine. Basic and acidic residues-rich tracts occupy residues 32–63 and 70–82; these read SEKE…KKNP and KTPE…KKGD. Over residues 94–109 the composition is skewed to gly residues; that stretch reads SGEGDGGGGPAEGGTG. Positions 141 to 157 are enriched in basic and acidic residues; the sequence is GEAKAGKKAAECREAGR. Residues Ser-160, Ser-166, and Ser-168 each carry the phosphoserine modification. Positions 299–554 constitute a Protein kinase domain; it reads MNSKEALGGG…AEQCLAHPWL (256 aa). ATP is bound by residues 305–313 and Lys-328; that span reads LGGGKFGAV. The active-site Proton acceptor is the Asp-420. Phosphothreonine is present on Thr-459. Positions 588–600 are calmodulin-binding; it reads IAVSAANRFKKIS.

It belongs to the protein kinase superfamily. CAMK Ser/Thr protein kinase family. May interact with centrin.

It is found in the cytoplasm. The catalysed reaction is L-seryl-[myosin light chain] + ATP = O-phospho-L-seryl-[myosin light chain] + ADP + H(+). It carries out the reaction L-threonyl-[myosin light chain] + ATP = O-phospho-L-threonyl-[myosin light chain] + ADP + H(+). Functionally, implicated in the level of global muscle contraction and cardiac function. Phosphorylates a specific serine in the N-terminus of a myosin light chain. This chain is Myosin light chain kinase 2, skeletal/cardiac muscle (Mylk2), found in Rattus norvegicus (Rat).